The following is a 795-amino-acid chain: MLSQVYRYGFQPFNQHLLPWVQCTTISRSHCIQPSVIRHVRSWSNIPFITVPLSRTHGKSFAHRSELKHAKRIVVKLGSAVVTRGDECGLALGRLASIVEQVSVLQNQGREMMLVTSGAVAFGKQRLRHEILLSQSVRQALHSGQNQLKEMAIPVLEARACAAAGQSGLMALYEAMFTQYSICAAQILVTNLDFHDEQKRRNLNGTLHELLRMNIVPIVNTNDAVVPPAEPNSDLQGVNVISVKDNDSLAARLAVEMKTDLLIVLSDVEGLFDSPPGSDDAKLIDIFYPGDQQSVTFGTKSRVGMGGMEAKVKAALWALQGGTSVVIANGTHPKVSGHVITDIVEGKKVGTFFSEVKPAGPTVEQQGEMARSGGRMLATLEPEQRAEIIHHLADLLTDQRDEILLANKKDLEEAEGRLAPPLLKRLSLSTSKLNSLAIGLRQIAASSQDSVGRVLRRTRIAKNLELEQVTVPIGVLLVIFESRPDCLPQVAALAIASGNGLLLKGGKEAAHSNRILHLLTQEALSIHGVKEAVQLVNTREEVEDLCRLDKMIDLIIPRGSSQLVRDIQKAAKGIPVMGHSEGICHMYVDSEASVDKVTRLVRDSKCEYPAACNALETLLIHRDLLRTPLFDQIIDMLRVEQVKIHAGPKFASYLTFSPSEVKSLRTEYGDLELCIEVVDNVQDAIDHIHKYGSSHTDVIVTENENTAEFFLQHVDSACVFWNASTRFSDGYRFGLGAEVGISTSRIHARGPVGLEGLLTTKWLLRGKDHVVSDFSEHGSLKYLHENLPIPQRNTN.

Positions 1 to 361 (MLSQVYRYGF…FFSEVKPAGP (361 aa)) are glutamate 5-kinase. Positions 117, 223, and 246 each coordinate substrate. ATP-binding positions include 266–267 (SD) and 305–311 (MGGMEAK). Residues Lys311, Lys347, and Lys550 each carry the N6-succinyllysine modification. Residues 362–795 (TVEQQGEMAR…NLPIPQRNTN (434 aa)) are gamma-glutamyl phosphate reductase.

The protein in the N-terminal section; belongs to the glutamate 5-kinase family. In the C-terminal section; belongs to the gamma-glutamyl phosphate reductase family. Can form homodimers/multimers.

It localises to the mitochondrion matrix. The catalysed reaction is L-glutamate + ATP = L-glutamyl 5-phosphate + ADP. It carries out the reaction L-glutamate 5-semialdehyde + phosphate + NADP(+) = L-glutamyl 5-phosphate + NADPH + H(+). Its pathway is amino-acid biosynthesis; L-proline biosynthesis; L-glutamate 5-semialdehyde from L-glutamate: step 1/2. It participates in amino-acid biosynthesis; L-proline biosynthesis; L-glutamate 5-semialdehyde from L-glutamate: step 2/2. Functionally, bifunctional enzyme that converts glutamate to glutamate 5-semialdehyde, an intermediate in the biosynthesis of proline, ornithine and arginine. The chain is Delta-1-pyrroline-5-carboxylate synthase (ALDH18A1) from Pongo abelii (Sumatran orangutan).